A 334-amino-acid polypeptide reads, in one-letter code: tRNA-dihydrouridine(20/20a) synthase (334 aa).

FMN is bound by residues 18-20 (PMM) and glutamine 71. Cysteine 101 acts as the Proton donor in catalysis. Residues lysine 140, histidine 172, 212-214 (NGG), and 234-235 (GR) contribute to the FMN site.

This sequence belongs to the Dus family. DusA subfamily. FMN is required as a cofactor.

It catalyses the reaction 5,6-dihydrouridine(20) in tRNA + NADP(+) = uridine(20) in tRNA + NADPH + H(+). It carries out the reaction 5,6-dihydrouridine(20) in tRNA + NAD(+) = uridine(20) in tRNA + NADH + H(+). The enzyme catalyses 5,6-dihydrouridine(20a) in tRNA + NADP(+) = uridine(20a) in tRNA + NADPH + H(+). The catalysed reaction is 5,6-dihydrouridine(20a) in tRNA + NAD(+) = uridine(20a) in tRNA + NADH + H(+). Its function is as follows. Catalyzes the synthesis of 5,6-dihydrouridine (D), a modified base found in the D-loop of most tRNAs, via the reduction of the C5-C6 double bond in target uridines. Specifically modifies U20 and U20a in tRNAs. This is tRNA-dihydrouridine(20/20a) synthase from Xanthomonas axonopodis pv. citri (strain 306).